We begin with the raw amino-acid sequence, 241 residues long: MANMGSRKHLKRFKAPKMWPIHKKEEVWTTKTSAGPHALEESIPLVMVLRDILGLAANSREAKIILNNSDVLVDGIPRKNHRFPVGFMDVISIPKINKTFRVLQDYKGRLVLKEIEEKDSTFKLVKILGKTTIKGGKTQLNLEGGRNIIADDDYKTGDVLLLNIPEQKISDSIKFEEGALGLITGGKHISEVGKIDEIKITQSSKSNTVLMETEEGSFLTLARYVFVVGQDKPVISLVGDN.

The region spanning 43 to 105 (IPLVMVLRDI…INKTFRVLQD (63 aa)) is the S4 RNA-binding domain.

This sequence belongs to the eukaryotic ribosomal protein eS4 family.

The sequence is that of Small ribosomal subunit protein eS4 from Methanosphaera stadtmanae (strain ATCC 43021 / DSM 3091 / JCM 11832 / MCB-3).